The chain runs to 513 residues: Bifunctional purine biosynthesis protein PurH (513 aa).

Residues 1 to 144 (MKRALVSVSD…KNYRDVTIVV (144 aa)) form the MGS-like domain.

It belongs to the PurH family.

It carries out the reaction (6R)-10-formyltetrahydrofolate + 5-amino-1-(5-phospho-beta-D-ribosyl)imidazole-4-carboxamide = 5-formamido-1-(5-phospho-D-ribosyl)imidazole-4-carboxamide + (6S)-5,6,7,8-tetrahydrofolate. The enzyme catalyses IMP + H2O = 5-formamido-1-(5-phospho-D-ribosyl)imidazole-4-carboxamide. It participates in purine metabolism; IMP biosynthesis via de novo pathway; 5-formamido-1-(5-phospho-D-ribosyl)imidazole-4-carboxamide from 5-amino-1-(5-phospho-D-ribosyl)imidazole-4-carboxamide (10-formyl THF route): step 1/1. Its pathway is purine metabolism; IMP biosynthesis via de novo pathway; IMP from 5-formamido-1-(5-phospho-D-ribosyl)imidazole-4-carboxamide: step 1/1. The chain is Bifunctional purine biosynthesis protein PurH from Lactobacillus delbrueckii subsp. bulgaricus (strain ATCC BAA-365 / Lb-18).